The primary structure comprises 184 residues: tRNA (cytidine(56)-2'-O)-methyltransferase (184 aa).

Residues Leu87, 112-116, and 130-137 each bind S-adenosyl-L-methionine; these read GAEKV and VANQPHSE.

This sequence belongs to the aTrm56 family. In terms of assembly, homodimer.

The protein localises to the cytoplasm. It carries out the reaction cytidine(56) in tRNA + S-adenosyl-L-methionine = 2'-O-methylcytidine(56) in tRNA + S-adenosyl-L-homocysteine + H(+). Its function is as follows. Specifically catalyzes the AdoMet-dependent 2'-O-ribose methylation of cytidine at position 56 in tRNAs. This Methanocorpusculum labreanum (strain ATCC 43576 / DSM 4855 / Z) protein is tRNA (cytidine(56)-2'-O)-methyltransferase.